The chain runs to 900 residues: MEFRFENLLGAPYRGGNAVITKNTQLISPVGNRVSVTDLSKNHSVTLPLETSTNICRLASSPDGTFLLAVDEQNRCLFINLPRRVVLHRITFKDKVGALKFSPNGKFIAVGIGKLVEIWRSPGFRRAVLPFERVRTFANSDDKVVSLEWSLDSDYLLVGSRDLAARLFCVRKLKGVLNKPFLFLGHRDSVVGCFFGVDKMTNKVNRAFTIARDGYIFSWGYTEKDVKMDESEDGHSEPPSPVTPDRADEVMVENGGGVGTELKKRKEYDGKGLESDEEGDDDDEEYMHRGKWVLLRKDGCNQASAKVTACDYHQGLDMVVVGFSNGVFGLYQMPDFICIHLLSISRQKLTTAVFNERGNWLTFGCAKLGQLLVWDWRTETYILKQQGHYFDVNCVTYSPDSQLLATGADDNKVKVWNVMSGTCFITFTEHTNAVTALHFMADNHSLLSASLDGTVRAWDFKRYKNYKTYTTPTPRQFVSLTADPSGDVVCAGTLDSFEIFVWSKKTGQIKDILSGHEAPVHGLMFSPLTQLLASSSWDYTVRLWDVFASKGTVETFRHNHDVLTVAFRPDGKQLASSTLDGQINFWDTIEGVLMYTIEGRRDIAGGRVMTDRRSAANSSSGKCFTTLCYSADGGYILAAGTSRYICMYDIADQVLLRRFQISHNLSLDGVLDFLHSKKMTEAGPIDLIDDDNSDEEGGIDKQSRGNLGYDLPGSRPNRGRPIIRTKSLSIAPTGRSFAAATTEGVLIFSIDDTFIFDPTDLDIDVTPEAVEAAIEEDEVSRALALSMRLNEDSLIKKCIFAVAPADIKAVAISVRQKYLERLMEALVDLLENCPHLEFILHWCQEICKAHGSSIQRNYRTLLPALRSLQKAITRAHQDLADMCSSNEYTLRYLCSVPNNH.

WD repeat units lie at residues 10-47 (GAPY…SVTL), 50-89 (ETST…VLHR), 91-129 (TFKD…RAVL), 139-178 (NSDD…GVLN), and 185-229 (GHRD…VKMD). The disordered stretch occupies residues 228–284 (MDESEDGHSEPPSPVTPDRADEVMVENGGGVGTELKKRKEYDGKGLESDEEGDDDDE). The segment covering 261 to 274 (ELKKRKEYDGKGLE) has biased composition (basic and acidic residues). Position 275 is a phosphoserine (S275). The span at 275–284 (SDEEGDDDDE) shows a compositional bias: acidic residues. WD repeat units follow at residues 302-341 (QASA…CIHL), 344-384 (ISRQ…YILK), 387-426 (GHYF…CFIT), 429-468 (EHTN…NYKT), 472-512 (PTPR…IKDI), 515-554 (GHEA…GTVE), 557-596 (RHNH…LMYT), and 619-658 (SSGK…LLRR). The disordered stretch occupies residues 684-720 (PIDLIDDDNSDEEGGIDKQSRGNLGYDLPGSRPNRGR). The segment covering 687–697 (LIDDDNSDEEG) has biased composition (acidic residues). A WD 14 repeat occupies 720 to 759 (RPIIRTKSLSIAPTGRSFAAATTEGVLIFSIDDTFIFDPT).

It belongs to the WD repeat PWP2 family. In terms of assembly, component of the ribosomal small subunit (SSU) processome. Interacts with TBP1 in the nucleus. In terms of tissue distribution, expressed constitutively and ubiquitously; observed in seeds, seedlings, roots, leaves, stems, flowers and siliques.

The protein localises to the nucleus. Its subcellular location is the nucleolus. Functionally, involved in nucleolar processing of pre-18S ribosomal RNA. Plays a role early in ribosome biogenesis, especially in the maturation of 5.8S rRNA. Required for guard cell functions. The protein is Periodic tryptophan protein 2 of Arabidopsis thaliana (Mouse-ear cress).